A 643-amino-acid chain; its full sequence is Threonine--tRNA ligase (643 aa).

A TGS domain is found at 1–61 (MPIITLPDGS…EQDATLEIIT (61 aa)). The interval 243–534 (DHRKIGKALD…ITEEYAGFFP (292 aa)) is catalytic. Zn(2+) contacts are provided by Cys334, His385, and His511.

It belongs to the class-II aminoacyl-tRNA synthetase family. Homodimer. It depends on Zn(2+) as a cofactor.

The protein localises to the cytoplasm. The catalysed reaction is tRNA(Thr) + L-threonine + ATP = L-threonyl-tRNA(Thr) + AMP + diphosphate + H(+). Functionally, catalyzes the attachment of threonine to tRNA(Thr) in a two-step reaction: L-threonine is first activated by ATP to form Thr-AMP and then transferred to the acceptor end of tRNA(Thr). Also edits incorrectly charged L-seryl-tRNA(Thr). The polypeptide is Threonine--tRNA ligase (Haemophilus influenzae (strain 86-028NP)).